The sequence spans 206 residues: Large ribosomal subunit protein uL3 (206 aa).

The segment at 116-149 is disordered; the sequence is GFQGAIKRHNQSRGPMSHGSRYHRRPGSMGPVAP.

Belongs to the universal ribosomal protein uL3 family. Part of the 50S ribosomal subunit. Forms a cluster with proteins L14 and L19.

Functionally, one of the primary rRNA binding proteins, it binds directly near the 3'-end of the 23S rRNA, where it nucleates assembly of the 50S subunit. This Shouchella clausii (strain KSM-K16) (Alkalihalobacillus clausii) protein is Large ribosomal subunit protein uL3.